The following is a 643-amino-acid chain: Sodium/iodide cotransporter (643 aa).

The Extracellular segment spans residues 1 to 14 (MEAVETGERPTFGA). Residues 15–31 (WDYGVFALMLLVSTGIG) form a helical membrane-spanning segment. Over 32-56 (LWVGLARGGQRSAEDFFTGGRRLAA) the chain is Cytoplasmic. Residues 57–80 (LPVGLSLSASFMSAVQVLGVPSEA) form a discontinuously helical membrane-spanning segment. The Na(+) site is built by Ser69, Val71, and Gln72. Residue Val76 participates in iodide binding. Residues 81–84 (YRYG) are Extracellular-facing. A helical transmembrane segment spans residues 85-105 (LKFLWMCLGQLLNSVLTALLF). Iodide is bound at residue Met90. Over 106-130 (MPVFYRLGLTSTYEYLEMRFSRAVR) the chain is Cytoplasmic. A helical transmembrane segment spans residues 131–157 (LCGTLQYIVATMLYTGIVIYAPALILN). Tyr144 is a binding site for Na(+). Residues 158-163 (QVTGLD) are Extracellular-facing. A helical membrane pass occupies residues 164–181 (IWASLLSTGIICTFYTAV). Topologically, residues 182–189 (GGMKAVVW) are cytoplasmic. A helical membrane pass occupies residues 190–208 (TDVFQVVVMLSGFWVVLAR). Residues 209–243 (GVMLVGGPRQVLTLAQNHSRINLMDFNPDPRSRYT) are Extracellular-facing. Residues 244 to 266 (FWTFVVGGTLVWLSMYGVNQAQV) traverse the membrane as a discontinuously helical segment. Trp255 is an iodide binding site. Met258 contributes to the Na(+) binding site. Over 267 to 278 (QRYVACRTEKQA) the chain is Cytoplasmic. The helical transmembrane segment at 279 to 301 (KLALLINQVGLFLIVSSAACCGI) threads the bilayer. Residues 302-335 (VMFVFYTDCDPLLLGRISAPDQYMPLLVLDIFED) are Extracellular-facing. Residues 336 to 363 (LPGVPGLFLACAYSGTLSTASTSINAMA) traverse the membrane as a helical segment. The Cytoplasmic segment spans residues 364-386 (AVTVEDLIKPRLRSLAPRKLVII). Residues 387 to 408 (SKGLSLIYGSACLTVAALSSLL) form a helical membrane-spanning segment. At 409–411 (GGG) the chain is on the extracellular side. The chain crosses the membrane as a helical span at residues 412–437 (VLQGSFTVMGVISGPLLGAFILGMFL). Residue Leu413 coordinates iodide. 2 residues coordinate Na(+): Ser416 and Phe417. Phe417 provides a ligand contact to iodide. The Cytoplasmic portion of the chain corresponds to 438-441 (PACN). A helical membrane pass occupies residues 442–465 (TPGVLAGLGAGLALSLWVALGATL). Residues 466–525 (YPPSEQTMRVLPSSAARCVALSVNASGLLDPALLPANDSSRAPSSGMDASRPALADSFYA) are Extracellular-facing. N-linked (GlcNAc...) asparagine glycosylation is found at Asn489 and Asn502. The helical transmembrane segment at 526-550 (ISYLYYGALGTLTTVLCGALISCLT) threads the bilayer. Topologically, residues 551–643 (GPTKRSTLAP…GGRDQQETNL (93 aa)) are cytoplasmic. Ser556 carries the post-translational modification Phosphoserine; by PKA. The disordered stretch occupies residues 623–643 (AGSWTPCVGHDGGRDQQETNL). The span at 633–643 (DGGRDQQETNL) shows a compositional bias: basic and acidic residues.

The protein belongs to the sodium:solute symporter (SSF) (TC 2.A.21) family. As to quaternary structure, monomer. In terms of processing, glycosylated. Expression is primarily in thyroid tissue, but also to a lower extent in mammary gland and ovary. Expression is reduced in tumors.

The protein resides in the cell membrane. The protein localises to the cytoplasm. The catalysed reaction is iodide(out) + 2 Na(+)(out) = iodide(in) + 2 Na(+)(in). The enzyme catalyses chlorate(out) + 2 Na(+)(out) = chlorate(in) + 2 Na(+)(in). It carries out the reaction thiocyanate(out) + 2 Na(+)(out) = thiocyanate(in) + 2 Na(+)(in). It catalyses the reaction nitrate(out) + 2 Na(+)(out) = nitrate(in) + 2 Na(+)(in). The catalysed reaction is selenocyanate(out) + 2 Na(+)(out) = selenocyanate(in) + 2 Na(+)(in). With respect to regulation, dysidenin and perchlorate inhibit iodide transport activity. Oxyanions inhibit iodide transport activity by blocking the binding sites for iodide and one of the sodium ions. Functionally, sodium:iodide symporter that mediates the transport of iodide into the thyroid gland. Can also mediate the transport of chlorate, thiocynate, nitrate and selenocynate. This chain is Sodium/iodide cotransporter (SLC5A5), found in Homo sapiens (Human).